Here is a 377-residue protein sequence, read N- to C-terminus: Alanine racemase, catabolic (377 aa).

Lys-51 acts as the Proton acceptor; specific for D-alanine in catalysis. At Lys-51 the chain carries N6-(pyridoxal phosphate)lysine. Substrate is bound at residue Arg-150. Tyr-272 acts as the Proton acceptor; specific for L-alanine in catalysis. Residue Met-320 coordinates substrate.

This sequence belongs to the alanine racemase family. The cofactor is pyridoxal 5'-phosphate.

The catalysed reaction is L-alanine = D-alanine. Its function is as follows. Isomerizes L-alanine to D-alanine which is then oxidized to pyruvate by DadA. This is Alanine racemase, catabolic (dadX) from Rhizobium johnstonii (strain DSM 114642 / LMG 32736 / 3841) (Rhizobium leguminosarum bv. viciae).